A 530-amino-acid polypeptide reads, in one-letter code: Asc-type amino acid transporter 1 (530 aa).

A disordered region spans residues 1–36 (MRRDSDMASHIQQPGGHGNPGPAPSPSPGPGPGPGA). Residues 21-33 (GPAPSPSPGPGPG) show a composition bias toward pro residues. The next 10 helical transmembrane spans lie at 46–66 (IGLVSACTIIIGNIIGSGIFI), 78–98 (VGLALFVWVLGGGVTALGSLC), 119–139 (IFGGLAGFLLLWSAVLIMYPT), 192–212 (IQVIFTGGKLLALSLIITVGF), 274–294 (AIFISIPLVTFVYTFTNVAYF), 316–336 (LLGYFSWVMPVSVALSTFGGI), 368–388 (CTPIPALLVCCGATAVIMLVG), 394–414 (INYVSFINYLCYGVTILGLLV), 430–450 (LLVPVVYLVFWAFLLVFSFIS), and 454–474 (VCGVGIIIILTGVPIFFLGVF). Residues 508 to 530 (EEENGPMGQPSPLPITDKPLKTQ) form a disordered region.

This sequence belongs to the amino acid-polyamine-organocation (APC) superfamily. In terms of assembly, disulfide-linked heterodimer with the amino acid transport protein SLC3A2/4F2hc.

It is found in the cell membrane. It catalyses the reaction L-alanine(in) + glycine(out) = L-alanine(out) + glycine(in). It carries out the reaction L-serine(out) + L-alanine(in) = L-serine(in) + L-alanine(out). The catalysed reaction is L-threonine(out) + L-alanine(in) = L-threonine(in) + L-alanine(out). The enzyme catalyses L-cysteine(out) + L-alanine(in) = L-cysteine(in) + L-alanine(out). It catalyses the reaction 2-aminoisobutanoate(out) + L-alanine(in) = 2-aminoisobutanoate(in) + L-alanine(out). It carries out the reaction D-serine(out) + L-alanine(in) = D-serine(in) + L-alanine(out). The catalysed reaction is D-alanine(out) + L-alanine(in) = D-alanine(in) + L-alanine(out). The enzyme catalyses L-valine(out) + L-alanine(in) = L-valine(in) + L-alanine(out). It catalyses the reaction L-methionine(out) + L-alanine(in) = L-methionine(in) + L-alanine(out). It carries out the reaction beta-alanine(out) + L-alanine(in) = beta-alanine(in) + L-alanine(out). The catalysed reaction is D-cysteine(out) + L-alanine(in) = D-cysteine(in) + L-alanine(out). The enzyme catalyses D-threonine(out) + L-alanine(in) = D-threonine(in) + L-alanine(out). It catalyses the reaction D-isoleucine(out) + D-serine(in) = D-isoleucine(in) + D-serine(out). It carries out the reaction D-serine(in) = D-serine(out). In terms of biological role, associates with SLC3A2/4F2hc to form a functional heterodimeric complex that translocates small neutral L- and D-amino acids across the plasma membrane. Preferentially mediates exchange transport, but can also operate via facilitated diffusion. Acts as a major transporter for glycine, L- and D-serine in the central nervous system. At the spinal cord and brainstem regulates glycine metabolism and glycinergic inhibitory neurotransmission by providing for glycine de novo synthesis from L-serine and glycine recycling from astrocytes to glycinergic motor neurons. At Schaffer collateral-CA1 synapses mediates D-serine and glycine release that modulates post-synaptic activation of NMDA receptors and excitatory glutamatergic transmission. May regulate D-serine release from mesenchymal progenitors located in developing subcutaneous adipose tissue, favoring white adipocyte over thermogenic beige adipocyte lineage commitment. The sequence is that of Asc-type amino acid transporter 1 (Slc7a10) from Rattus norvegicus (Rat).